The sequence spans 174 residues: Disulfide bond formation protein B (174 aa).

The Cytoplasmic segment spans residues 1 to 17 (MSFQVVTGWLDNSPRRI). A helical transmembrane segment spans residues 18-34 (FAFVSLASIGMLAFGQY). Topologically, residues 35 to 52 (LQHVVGLEPCPMCIVQRY) are periplasmic. Cysteine 44 and cysteine 47 are oxidised to a cystine. A helical transmembrane segment spans residues 53–67 (ALVLVAIIAGLTGAS). Residues 68 to 74 (GRKGLHL) lie on the Cytoplasmic side of the membrane. The helical transmembrane segment at 75-92 (GGAVLMLGSSGFGAYVAA) threads the bilayer. Over 93–148 (RQSWLQWYPPEVVSCGRDFYGMIETFPLQRAIPMIFKGSGDCSKVDWTFLGGSIAN) the chain is Periplasmic. An intrachain disulfide couples cysteine 107 to cysteine 134. The helical transmembrane segment at 149–167 (WTFVVFGLIVLLSLALIWR) threads the bilayer. Topologically, residues 168 to 174 (RVSRRVS) are cytoplasmic.

It belongs to the DsbB family.

It localises to the cell inner membrane. Functionally, required for disulfide bond formation in some periplasmic proteins. Acts by oxidizing the DsbA protein. The sequence is that of Disulfide bond formation protein B from Albidiferax ferrireducens (strain ATCC BAA-621 / DSM 15236 / T118) (Rhodoferax ferrireducens).